The chain runs to 167 residues: Crossover junction endodeoxyribonuclease RuvC (167 aa).

Catalysis depends on residues Asp8, Glu68, and Asp140. The Mg(2+) site is built by Asp8, Glu68, and Asp140.

This sequence belongs to the RuvC family. As to quaternary structure, homodimer which binds Holliday junction (HJ) DNA. The HJ becomes 2-fold symmetrical on binding to RuvC with unstacked arms; it has a different conformation from HJ DNA in complex with RuvA. In the full resolvosome a probable DNA-RuvA(4)-RuvB(12)-RuvC(2) complex forms which resolves the HJ. It depends on Mg(2+) as a cofactor.

It localises to the cytoplasm. It carries out the reaction Endonucleolytic cleavage at a junction such as a reciprocal single-stranded crossover between two homologous DNA duplexes (Holliday junction).. Functionally, the RuvA-RuvB-RuvC complex processes Holliday junction (HJ) DNA during genetic recombination and DNA repair. Endonuclease that resolves HJ intermediates. Cleaves cruciform DNA by making single-stranded nicks across the HJ at symmetrical positions within the homologous arms, yielding a 5'-phosphate and a 3'-hydroxyl group; requires a central core of homology in the junction. The consensus cleavage sequence is 5'-(A/T)TT(C/G)-3'. Cleavage occurs on the 3'-side of the TT dinucleotide at the point of strand exchange. HJ branch migration catalyzed by RuvA-RuvB allows RuvC to scan DNA until it finds its consensus sequence, where it cleaves and resolves the cruciform DNA. This chain is Crossover junction endodeoxyribonuclease RuvC, found in Sinorhizobium medicae (strain WSM419) (Ensifer medicae).